We begin with the raw amino-acid sequence, 762 residues long: Primary amine oxidase, lung isozyme (762 aa).

The N-terminal stretch at 1-16 is a signal peptide; sequence MFIFIFLSLWTLLVMG. The disordered stretch occupies residues 23–54; sequence GSEEGVGKQCHPSLPPRCPSRSPSDQPWTHPD. The N-linked (GlcNAc...) asparagine glycan is linked to Asn-136. A disulfide bond links Cys-197 and Cys-198. Thr-211 is a glycosylation site (O-linked (GalNAc...) threonine). Residues Asn-231 and Asn-293 are each glycosylated (N-linked (GlcNAc...) asparagine). 383–393 serves as a coordination point for substrate; that stretch reads YMDACFGMGKF. Asp-385 functions as the Proton acceptor in the catalytic mechanism. Residues Cys-403 and Cys-429 are joined by a disulfide bond. 467 to 472 is a binding site for substrate; the sequence is LLNYDY. Tyr-470 serves as the catalytic Schiff-base intermediate with substrate; via topaquinone. Tyr-470 is modified (2',4',5'-topaquinone). Positions 519 and 521 each coordinate Cu cation. Residues Asp-528, Leu-529, Asp-530, and Glu-571 each contribute to the Ca(2+) site. 577–584 provides a ligand contact to heparin; that stretch reads PLGGGSPR. N-linked (GlcNAc...) asparagine glycosylation occurs at Asn-617. Positions 662 and 664 each coordinate Ca(2+). The N-linked (GlcNAc...) asparagine glycan is linked to Asn-665. Positions 666, 672, and 673 each coordinate Ca(2+). His-683 provides a ligand contact to Cu cation. Cysteines 733 and 740 form a disulfide.

This sequence belongs to the copper/topaquinone oxidase family. Homodimer; disulfide-linked. Cu cation serves as cofactor. Ca(2+) is required as a cofactor. The cofactor is L-topaquinone. In terms of processing, topaquinone (TPQ) is generated by copper-dependent autoxidation of a specific tyrosyl residue. In terms of tissue distribution, expressed in lung, spleen, heart and kidney.

It localises to the secreted. Its subcellular location is the extracellular space. The catalysed reaction is a primary methyl amine + O2 + H2O = an aldehyde + H2O2 + NH4(+). This Bos taurus (Bovine) protein is Primary amine oxidase, lung isozyme.